The chain runs to 324 residues: Beta-ketoacyl-[acyl-carrier-protein] synthase III (324 aa).

Active-site residues include cysteine 112 and histidine 251. The interval 252–256 (QANLR) is ACP-binding. Residue asparagine 281 is part of the active site.

Belongs to the thiolase-like superfamily. FabH family. Homodimer.

The protein localises to the cytoplasm. It carries out the reaction malonyl-[ACP] + acetyl-CoA + H(+) = 3-oxobutanoyl-[ACP] + CO2 + CoA. It participates in lipid metabolism; fatty acid biosynthesis. Catalyzes the condensation reaction of fatty acid synthesis by the addition to an acyl acceptor of two carbons from malonyl-ACP. Catalyzes the first condensation reaction which initiates fatty acid synthesis and may therefore play a role in governing the total rate of fatty acid production. Possesses both acetoacetyl-ACP synthase and acetyl transacylase activities. Its substrate specificity determines the biosynthesis of branched-chain and/or straight-chain of fatty acids. The polypeptide is Beta-ketoacyl-[acyl-carrier-protein] synthase III (Clostridium perfringens (strain SM101 / Type A)).